The sequence spans 66 residues: Large ribosomal subunit protein bL35 (66 aa).

Residues 1–26 (MPKMKTHRGSAKRFKKTGSGKLKRSH) show a composition bias toward basic residues. The disordered stretch occupies residues 1–45 (MPKMKTHRGSAKRFKKTGSGKLKRSHAYTSHLFANKSQKQKRKLR).

It belongs to the bacterial ribosomal protein bL35 family.

The sequence is that of Large ribosomal subunit protein bL35 from Bacillus velezensis (strain DSM 23117 / BGSC 10A6 / LMG 26770 / FZB42) (Bacillus amyloliquefaciens subsp. plantarum).